The chain runs to 130 residues: S-adenosylmethionine decarboxylase proenzyme (130 aa).

The Schiff-base intermediate with substrate; via pyruvic acid role is filled by S66. S66 bears the Pyruvic acid (Ser); by autocatalysis mark. Residue H71 is the Proton acceptor; for processing activity of the active site. The Proton donor; for catalytic activity role is filled by C86.

Belongs to the prokaryotic AdoMetDC family. Type 1 subfamily. In terms of assembly, heterotetramer of two alpha and two beta chains arranged as a dimer of alpha/beta heterodimers. Requires pyruvate as cofactor. In terms of processing, is synthesized initially as an inactive proenzyme. Formation of the active enzyme involves a self-maturation process in which the active site pyruvoyl group is generated from an internal serine residue via an autocatalytic post-translational modification. Two non-identical subunits are generated from the proenzyme in this reaction, and the pyruvate is formed at the N-terminus of the alpha chain, which is derived from the carboxyl end of the proenzyme. The post-translation cleavage follows an unusual pathway, termed non-hydrolytic serinolysis, in which the side chain hydroxyl group of the serine supplies its oxygen atom to form the C-terminus of the beta chain, while the remainder of the serine residue undergoes an oxidative deamination to produce ammonia and the pyruvoyl group blocking the N-terminus of the alpha chain.

The enzyme catalyses S-adenosyl-L-methionine + H(+) = S-adenosyl 3-(methylsulfanyl)propylamine + CO2. It functions in the pathway amine and polyamine biosynthesis; S-adenosylmethioninamine biosynthesis; S-adenosylmethioninamine from S-adenosyl-L-methionine: step 1/1. In terms of biological role, catalyzes the decarboxylation of S-adenosylmethionine to S-adenosylmethioninamine (dcAdoMet), the propylamine donor required for the synthesis of the polyamines spermine and spermidine from the diamine putrescine. This Bacillus cereus (strain ATCC 10987 / NRS 248) protein is S-adenosylmethionine decarboxylase proenzyme.